The sequence spans 505 residues: Ribose import ATP-binding protein RbsA 2 (505 aa).

2 consecutive ABC transporter domains span residues 13–249 and 259–503; these read LALE…VGRD and VRAG…TGRA. 45–52 contacts ATP; it reads GENGAGKS.

This sequence belongs to the ABC transporter superfamily. Ribose importer (TC 3.A.1.2.1) family. The complex is composed of an ATP-binding protein (RbsA), two transmembrane proteins (RbsC) and a solute-binding protein (RbsB).

Its subcellular location is the cell membrane. The enzyme catalyses D-ribose(out) + ATP + H2O = D-ribose(in) + ADP + phosphate + H(+). Its function is as follows. Part of the ABC transporter complex RbsABC involved in ribose import. Responsible for energy coupling to the transport system. The chain is Ribose import ATP-binding protein RbsA 2 from Streptomyces avermitilis (strain ATCC 31267 / DSM 46492 / JCM 5070 / NBRC 14893 / NCIMB 12804 / NRRL 8165 / MA-4680).